Here is a 326-residue protein sequence, read N- to C-terminus: Phospho-N-acetylmuramoyl-pentapeptide-transferase (326 aa).

10 helical membrane-spanning segments follow: residues 2 to 22 (ILATKVFFTSFVFGFILFPYF), 51 to 71 (VPPMGGIIILISSLLPILLWA), 73 to 93 (LTPEILLLILITLFFALLGFI), 113 to 133 (ILIQFIVALVGVFILKLYSAE), 143 to 163 (GVIIDFGYLYVPFAAFVIVGS), 175 to 195 (GLAATQVITSFAFLGLIAYIT), 199 to 219 (MNITLFCIAFIGAILSFLWFN), 225 to 245 (IFMGDVGSLSVGAALGLTSVL), 250 to 270 (MLFAIIGIIFVIETLSVIIQI), and 305 to 325 (VIVMKFWIISIICSVFTITFL).

The protein belongs to the glycosyltransferase 4 family. MraY subfamily. Mg(2+) serves as cofactor.

It is found in the cell membrane. The catalysed reaction is UDP-N-acetyl-alpha-D-muramoyl-L-alanyl-gamma-D-glutamyl-meso-2,6-diaminopimeloyl-D-alanyl-D-alanine + di-trans,octa-cis-undecaprenyl phosphate = di-trans,octa-cis-undecaprenyl diphospho-N-acetyl-alpha-D-muramoyl-L-alanyl-D-glutamyl-meso-2,6-diaminopimeloyl-D-alanyl-D-alanine + UMP. Its pathway is cell wall biogenesis; peptidoglycan biosynthesis. In terms of biological role, catalyzes the initial step of the lipid cycle reactions in the biosynthesis of the cell wall peptidoglycan: transfers peptidoglycan precursor phospho-MurNAc-pentapeptide from UDP-MurNAc-pentapeptide onto the lipid carrier undecaprenyl phosphate, yielding undecaprenyl-pyrophosphoryl-MurNAc-pentapeptide, known as lipid I. The protein is Phospho-N-acetylmuramoyl-pentapeptide-transferase of Wolbachia pipientis wMel.